The sequence spans 201 residues: Imidazole glycerol phosphate synthase subunit HisH (201 aa).

Residues 1 to 201 enclose the Glutamine amidotransferase type-1 domain; sequence MVFIADYGAG…LKVLANFAEL (201 aa). Cysteine 79 serves as the catalytic Nucleophile. Residues histidine 183 and glutamate 185 contribute to the active site.

Heterodimer of HisH and HisF.

It is found in the cytoplasm. The catalysed reaction is 5-[(5-phospho-1-deoxy-D-ribulos-1-ylimino)methylamino]-1-(5-phospho-beta-D-ribosyl)imidazole-4-carboxamide + L-glutamine = D-erythro-1-(imidazol-4-yl)glycerol 3-phosphate + 5-amino-1-(5-phospho-beta-D-ribosyl)imidazole-4-carboxamide + L-glutamate + H(+). It catalyses the reaction L-glutamine + H2O = L-glutamate + NH4(+). The protein operates within amino-acid biosynthesis; L-histidine biosynthesis; L-histidine from 5-phospho-alpha-D-ribose 1-diphosphate: step 5/9. Its function is as follows. IGPS catalyzes the conversion of PRFAR and glutamine to IGP, AICAR and glutamate. The HisH subunit catalyzes the hydrolysis of glutamine to glutamate and ammonia as part of the synthesis of IGP and AICAR. The resulting ammonia molecule is channeled to the active site of HisF. In Chlorobium chlorochromatii (strain CaD3), this protein is Imidazole glycerol phosphate synthase subunit HisH.